The primary structure comprises 152 residues: Ribosome maturation factor RimP (152 aa).

This sequence belongs to the RimP family.

It is found in the cytoplasm. Required for maturation of 30S ribosomal subunits. The protein is Ribosome maturation factor RimP of Escherichia coli (strain K12 / MC4100 / BW2952).